The sequence spans 945 residues: Sensor kinase CckA (945 aa).

The next 2 helical transmembrane spans lie at 111–131 (ALRL…YFLF) and 139–159 (FALV…FGAA). PAS domains follow at residues 171 to 212 (HQDL…TDAD), 313 to 341 (LDHA…EWLG), and 432 to 505 (AEVR…FAGQ). The region spanning 574–797 (GIAHDFNNVL…TFKIFLPRLI (224 aa)) is the Histidine kinase domain. His-577 is modified (phosphohistidine; by autocatalysis). One can recognise a Response regulatory domain in the interval 825 to 941 (TVLLVEDEDA…QLATTVKEML (117 aa)). Asp-876 carries the post-translational modification 4-aspartylphosphate.

It localises to the cell inner membrane. The catalysed reaction is ATP + protein L-histidine = ADP + protein N-phospho-L-histidine.. Component of a regulatory phosphorelay system that controls B.abortus cell growth, division, and intracellular survival inside mammalian host cells. This signaling pathway is composed of CckA, ChpT, CtrA and CpdR. CckA autophosphorylates in the presence of ATP on a conserved His residue and transfers a phosphoryl group to a conserved Asp residue on its C-terminal receiver domain. CckA-P transfers phosphoryl groups to the ChpT phosphotransferase. The sequence is that of Sensor kinase CckA from Brucella abortus (strain 2308).